The following is a 289-amino-acid chain: Protoheme IX farnesyltransferase (289 aa).

9 consecutive transmembrane segments (helical) span residues 18 to 38, 40 to 60, 87 to 107, 111 to 131, 139 to 159, 168 to 188, 212 to 232, 234 to 254, and 269 to 289; these read VTSLVLATIIPGLYLASEQSP, GFLIAITLFGTFLMSSASFIF, VVQATLVGIAMMGSSFYVLAV, LLTALCAFAALISYVFLYTIF, NIVIGGVAGCVGPLIGYAAIG, SLFMMIFLWTPAHFWALAIFL, SIFFYTILYSIACVSFYFLES, MGFLYLIVSLIVCIWMGILSY, and FFFSILHLFIINITIVVDHLI.

The protein belongs to the UbiA prenyltransferase family. Protoheme IX farnesyltransferase subfamily.

Its subcellular location is the cell inner membrane. The catalysed reaction is heme b + (2E,6E)-farnesyl diphosphate + H2O = Fe(II)-heme o + diphosphate. It functions in the pathway porphyrin-containing compound metabolism; heme O biosynthesis; heme O from protoheme: step 1/1. Converts heme B (protoheme IX) to heme O by substitution of the vinyl group on carbon 2 of heme B porphyrin ring with a hydroxyethyl farnesyl side group. In Leptospira interrogans serogroup Icterohaemorrhagiae serovar copenhageni (strain Fiocruz L1-130), this protein is Protoheme IX farnesyltransferase.